The chain runs to 636 residues: Outer spore wall assembly protein SHE10 (636 aa).

The first 23 residues, 1–23, serve as a signal peptide directing secretion; the sequence is MRLVSKLLKALLVLLLAFGSVRY. Coiled coils occupy residues 433-460 and 551-584; these read RAHL…LFEE and KANL…TEFE. Residues 565-607 are disordered; that stretch reads QQREKEKAESASMKASTEFELSSSSFSSSSPSTASSCTASSTS. Positions 579–607 are enriched in low complexity; that stretch reads ASTEFELSSSSFSSSSPSTASSCTASSTS.

This sequence belongs to the SHE10 family. As to quaternary structure, component of the mitochondria-localized RNase mitochondrial RNA-processing (RNase MRP) composed of one single RNA encoded by the NME1 gene and at least 31 proteins. Absent in the nucleus-localized RNase MRP (NuMRP).

The protein resides in the mitochondrion. Involved in spore wall assembly. May be a component of the mitochondrial RNase MRP (MtMRP), a ribonucleoprotein endoribonuclease involved in the cleaving RNA transcripts to generate primers for DNA replication in mitochondria. The chain is Outer spore wall assembly protein SHE10 from Kluyveromyces lactis (strain ATCC 8585 / CBS 2359 / DSM 70799 / NBRC 1267 / NRRL Y-1140 / WM37) (Yeast).